A 612-amino-acid chain; its full sequence is Phosphopentomutase (612 aa).

Ala2 carries the N-acetylalanine modification. Alpha-D-glucose 1,6-bisphosphate-binding residues include Arg63 and Ser165. Catalysis depends on Ser165, which acts as the Phosphoserine intermediate. Mg(2+)-binding residues include Ser165, Asp322, Asp324, and Asp326. A Phosphoserine modification is found at Ser165. Asp326, Arg327, Thr400, Glu424, and Lys438 together coordinate alpha-D-glucose 1,6-bisphosphate.

The protein belongs to the phosphohexose mutase family. Monomer. Mg(2+) serves as cofactor.

It localises to the cytoplasm. The protein localises to the cytosol. The catalysed reaction is alpha-D-ribose 1-phosphate = D-ribose 5-phosphate. It carries out the reaction 2-deoxy-alpha-D-ribose 1-phosphate = 2-deoxy-D-ribose 5-phosphate. The enzyme catalyses alpha-D-glucose 1-phosphate = alpha-D-glucose 6-phosphate. It catalyses the reaction O-phospho-L-seryl-[protein] + alpha-D-glucose 1-phosphate = alpha-D-glucose 1,6-bisphosphate + L-seryl-[protein]. The catalysed reaction is alpha-D-glucose 1,6-bisphosphate + L-seryl-[protein] = O-phospho-L-seryl-[protein] + alpha-D-glucose 6-phosphate. With respect to regulation, the phosphomutase activity is stimulated by glucose 1,6-bisphosphate. In terms of biological role, catalyzes the conversion of the nucleoside breakdown products ribose-1-phosphate and deoxyribose-1-phosphate to the corresponding 5-phosphopentoses. Catalyzes the reversible isomerization of alpha-D-glucose 1-phosphate to alpha-D-glucose 6-phosphate but with a lower catalytic efficiency. The mechanism proceeds via the intermediate compound alpha-D-glucose 1,6-bisphosphate. In vitro, also has a low glucose 1,6-bisphosphate synthase activity which is most probably not physiologically relevant. The protein is Phosphopentomutase of Homo sapiens (Human).